The primary structure comprises 44 residues: Conotoxin Rg11a (44 aa).

Cystine bridges form between C1–C15, C8–C22, C14–C30, and C21–C36.

As to expression, expressed by the venom duct.

The protein resides in the secreted. Its function is as follows. Neurotoxin. Elicits hypersensibility when injected intracranially in mice. May act via potassium channel currents. This is Conotoxin Rg11a from Conus regius (Crown cone).